Reading from the N-terminus, the 1191-residue chain is DNA-directed RNA polymerase subunit beta (1191 aa).

The segment at 1164–1191 (EEEDLQPADALNIAPQPDTEEEPVESFE) is disordered. The segment covering 1181–1191 (DTEEEPVESFE) has biased composition (acidic residues).

It belongs to the RNA polymerase beta chain family. As to quaternary structure, the RNAP catalytic core consists of 2 alpha, 1 beta, 1 beta' and 1 omega subunit. When a sigma factor is associated with the core the holoenzyme is formed, which can initiate transcription.

The enzyme catalyses RNA(n) + a ribonucleoside 5'-triphosphate = RNA(n+1) + diphosphate. DNA-dependent RNA polymerase catalyzes the transcription of DNA into RNA using the four ribonucleoside triphosphates as substrates. The chain is DNA-directed RNA polymerase subunit beta from Lysinibacillus sphaericus (strain C3-41).